A 312-amino-acid chain; its full sequence is MSLFIGTHNIKNSAIQLLKTKLKNEFLKGVKCITKYPENAHSIFKVQEYTGYKGVTFIVSTKWNLTVDSIHKLIPEIKSSPSACLLLVNQPYPVIEKITDILTKHGITNANLLEFSKSSLLHPFKRNRHLLSFVPYPMTAETLGDISWSFSRRENMKFEKDQQYILSKFKSPRNLLIPYPSFLIQKFLDMAILPPMAALRILFYQYSKASTMSLTDDFYNKYVLENLNIINNLQIFLHLDLEPLHIKSLAKARKRFYETDLKTTFLNAFSRDELLMLVNYFIFRGTELKLSVSMNLAFRDILLSSAYLNKTK.

The protein localises to the mitochondrion. This is an uncharacterized protein from Schizosaccharomyces pombe (strain 972 / ATCC 24843) (Fission yeast).